The sequence spans 371 residues: GPI mannosyltransferase 1 (371 aa).

Transmembrane regions (helical) follow at residues 64–84, 120–140, 144–164, 190–210, 248–268, 290–310, 318–338, and 344–364; these read FPSW…WLMI, AILG…SVWL, ILGF…AFLV, IVVG…YLYG, ASSL…PLVF, VCTS…LPNS, LICL…AYNL, and SVFI…VYEL.

The protein belongs to the PIGM family.

It is found in the endoplasmic reticulum membrane. It participates in glycolipid biosynthesis; glycosylphosphatidylinositol-anchor biosynthesis. Its function is as follows. Mannosyltransferase involved in glycosylphosphatidylinositol-anchor biosynthesis. Transfers the first alpha-1,4-mannose to GlcN-acyl-PI during GPI precursor assembly. Required for cell wall integrity. In Schizosaccharomyces pombe (strain 972 / ATCC 24843) (Fission yeast), this protein is GPI mannosyltransferase 1 (gpi14).